A 133-amino-acid polypeptide reads, in one-letter code: Protein NrdI (133 aa).

It belongs to the NrdI family.

Probably involved in ribonucleotide reductase function. The protein is Protein NrdI of Cronobacter sakazakii (strain ATCC BAA-894) (Enterobacter sakazakii).